Consider the following 304-residue polypeptide: Nucleotide-binding protein RHA1_ro07174 (304 aa).

An ATP-binding site is contributed by Gly24–Gln31. Residue Asp75–Ser78 coordinates GTP.

Belongs to the RapZ-like family.

In terms of biological role, displays ATPase and GTPase activities. This Rhodococcus jostii (strain RHA1) protein is Nucleotide-binding protein RHA1_ro07174.